An 86-amino-acid chain; its full sequence is Progonadoliberin-2 (86 aa).

Positions 1 to 24 are cleaved as a signal peptide; it reads MVHICRLLVLMGMLLCLSAQFASS. Gln25 carries the post-translational modification Pyrrolidone carboxylic acid. Gly34 is subject to Glycine amide.

It belongs to the GnRH family.

The protein resides in the secreted. In terms of biological role, stimulates the secretion of gonadotropins. The chain is Progonadoliberin-2 (gnrh2) from Rutilus rutilus (Roach).